We begin with the raw amino-acid sequence, 392 residues long: Protein SRL2 (392 aa).

Serine 11 bears the Phosphoserine mark. The interval 18–52 (KPSETPKMEEEKLEVTNVNASSSKKVHKSKKSTSK) is disordered. Positions 21-31 (ETPKMEEEKLE) are enriched in basic and acidic residues. The span at 41-50 (KKVHKSKKST) shows a compositional bias: basic residues. Serine 139 is modified (phosphoserine). The disordered stretch occupies residues 284-303 (EDSTAVTNENGHISSEKNLK). Over residues 287–296 (TAVTNENGHI) the composition is skewed to polar residues.

The protein resides in the cytoplasm. Its subcellular location is the nucleus. The chain is Protein SRL2 (SRL2) from Saccharomyces cerevisiae (strain ATCC 204508 / S288c) (Baker's yeast).